The sequence spans 64 residues: Large ribosomal subunit protein uL29 (64 aa).

It belongs to the universal ribosomal protein uL29 family.

The polypeptide is Large ribosomal subunit protein uL29 (Legionella pneumophila (strain Lens)).